The primary structure comprises 80 residues: Serine rich endogenous peptide 15 (80 aa).

The N-terminal stretch at 1–28 (MSKEKSYVIALLLSLLLCLSFQVGVSEA) is a signal peptide. Short sequence motifs (SCOOP motif) lie at residues 32 to 46 (AVTT…CANG) and 66 to 80 (PRVA…GKGP). The segment at 37 to 80 (YSDSPRCANGSSASPPTRHCPRGRPRPPTPRVAVHSNSTKGKGP) is disordered. 2 short sequence motifs (sxS motif essential for MIK2 binding) span residues 38–40 (SDS) and 72–74 (SNS). A compositionally biased stretch (polar residues) spans 71-80 (HSNSTKGKGP).

This sequence belongs to the serine rich endogenous peptide (SCOOP) phytocytokine family. As to quaternary structure, interacts with MIK2 (via extracellular leucine-rich repeat domain); this interaction triggers the formation of complex between MIK2 and the BAK1/SERK3 and SERK4 coreceptors, and subsequent BAK1 activation by phosphorylation. As to expression, mostly expressed in leaves, and, to a lower extent, in seedlings shoots, roots, stems, siliques, seeds and flowers.

It localises to the cell membrane. It is found in the secreted. The protein resides in the extracellular space. Its subcellular location is the apoplast. The protein localises to the endoplasmic reticulum. It localises to the golgi apparatus. In terms of biological role, brassicaceae-specific phytocytokine (plant endogenous peptide released into the apoplast) perceived by MIK2 in a BAK1/SERK3 and SERK4 coreceptors-dependent manner, that modulates various physiological and antimicrobial processes including growth prevention and reactive oxygen species (ROS) response regulation. Inhibits root growth. In Arabidopsis thaliana (Mouse-ear cress), this protein is Serine rich endogenous peptide 15.